Here is a 283-residue protein sequence, read N- to C-terminus: Shikimate dehydrogenase (NADP(+)) (283 aa).

Shikimate contacts are provided by residues 19–21 and Thr66; that span reads SRS. Catalysis depends on Lys70, which acts as the Proton acceptor. An NADP(+)-binding site is contributed by Glu82. Asn91 and Asp107 together coordinate shikimate. Residues 133 to 137 and Ile226 contribute to the NADP(+) site; that span reads GAGGA. Tyr228 is a shikimate binding site. Gly249 contacts NADP(+).

This sequence belongs to the shikimate dehydrogenase family. In terms of assembly, homodimer.

The catalysed reaction is shikimate + NADP(+) = 3-dehydroshikimate + NADPH + H(+). The protein operates within metabolic intermediate biosynthesis; chorismate biosynthesis; chorismate from D-erythrose 4-phosphate and phosphoenolpyruvate: step 4/7. Involved in the biosynthesis of the chorismate, which leads to the biosynthesis of aromatic amino acids. Catalyzes the reversible NADPH linked reduction of 3-dehydroshikimate (DHSA) to yield shikimate (SA). This chain is Shikimate dehydrogenase (NADP(+)), found in Rhodospirillum rubrum (strain ATCC 11170 / ATH 1.1.1 / DSM 467 / LMG 4362 / NCIMB 8255 / S1).